The chain runs to 651 residues: Acetyl-coenzyme A synthetase (651 aa).

Residues 190–193 (RRGK) and Thr311 contribute to the CoA site. ATP-binding positions include 387–389 (GEP), 411–416 (DTWWQT), Asp508, and Arg523. Residue Ser531 participates in CoA binding. Position 534 (Arg534) interacts with ATP. Mg(2+) is bound by residues Val545, His547, and Val550. An N6-acetyllysine modification is found at Lys617.

The protein belongs to the ATP-dependent AMP-binding enzyme family. Requires Mg(2+) as cofactor. In terms of processing, acetylated. Deacetylation by the SIR2-homolog deacetylase activates the enzyme.

It catalyses the reaction acetate + ATP + CoA = acetyl-CoA + AMP + diphosphate. Functionally, catalyzes the conversion of acetate into acetyl-CoA (AcCoA), an essential intermediate at the junction of anabolic and catabolic pathways. AcsA undergoes a two-step reaction. In the first half reaction, AcsA combines acetate with ATP to form acetyl-adenylate (AcAMP) intermediate. In the second half reaction, it can then transfer the acetyl group from AcAMP to the sulfhydryl group of CoA, forming the product AcCoA. The protein is Acetyl-coenzyme A synthetase of Mycobacterium bovis (strain ATCC BAA-935 / AF2122/97).